A 147-amino-acid chain; its full sequence is Ubiquitin-conjugating enzyme E2 D4 (147 aa).

The 147-residue stretch at 1–147 (MALKRIQKEL…AREWTQKYAM (147 aa)) folds into the UBC core domain. Cys-85 functions as the Glycyl thioester intermediate in the catalytic mechanism.

This sequence belongs to the ubiquitin-conjugating enzyme family. In terms of assembly, interacts with map3k10/mlk2. As to expression, at embryonic stages 28 to 35, expressed in the somites, eye primordia, otic vesicle and branchial arches. By stage 35, also weakly expressed in the pronephros.

The enzyme catalyses S-ubiquitinyl-[E1 ubiquitin-activating enzyme]-L-cysteine + [E2 ubiquitin-conjugating enzyme]-L-cysteine = [E1 ubiquitin-activating enzyme]-L-cysteine + S-ubiquitinyl-[E2 ubiquitin-conjugating enzyme]-L-cysteine.. It functions in the pathway protein modification; protein ubiquitination. In terms of biological role, catalyzes the covalent attachment of ubiquitin to other proteins. Regulates pronephros development, possibly by promoting ubiquitination and thus inactivation or degradation of map3k10/mlk2. In Xenopus laevis (African clawed frog), this protein is Ubiquitin-conjugating enzyme E2 D4 (ube2d4).